Reading from the N-terminus, the 290-residue chain is Taxis protein CheF1 (290 aa).

As to quaternary structure, interacts with chemotaxis (Che) proteins as well as flagella accessory (Fla) proteins.

Functionally, involved in taxis signal transduction. Essential for the ability to control the direction of flagellar rotation. May have a role between CheY and the flagellum. The sequence is that of Taxis protein CheF1 (cheF1) from Halobacterium salinarum (strain ATCC 29341 / DSM 671 / R1).